We begin with the raw amino-acid sequence, 437 residues long: Elongation factor 1-gamma (437 aa).

N-acetylalanine is present on A2. One can recognise a GST N-terminal domain in the interval 2–87; the sequence is AAGTLYTYPE…YVSNEELRGS (86 aa). The region spanning 88–216 is the GST C-terminal domain; it reads TPEAAAQVVQ…VKLCEKMAQF (129 aa). N6-acetyllysine occurs at positions 147 and 212. Residues 221-254 show a composition bias toward basic and acidic residues; sequence FAESQPKKDTPRKEKGSREEKQKPQAERKEEKKA. The tract at residues 221–268 is disordered; it reads FAESQPKKDTPRKEKGSREEKQKPQAERKEEKKAAAPAPEEEMDECEQ. K253 is covalently cross-linked (Glycyl lysine isopeptide (Lys-Gly) (interchain with G-Cter in SUMO1)). An EF-1-gamma C-terminal domain is found at 276–437; that stretch reads AKDPFAHLPK…KAFNQGKIFK (162 aa). K285 participates in a covalent cross-link: Glycyl lysine isopeptide (Lys-Gly) (interchain with G-Cter in SUMO2). N6-acetyllysine is present on K401. An N6-acetyllysine; alternate modification is found at K434. N6-malonyllysine; alternate is present on K434.

As to quaternary structure, EF-1 is composed of four subunits: alpha, beta, delta, and gamma.

Functionally, probably plays a role in anchoring the complex to other cellular components. This chain is Elongation factor 1-gamma (EEF1G), found in Equus caballus (Horse).